Here is a 459-residue protein sequence, read N- to C-terminus: Sorting nexin-8 (459 aa).

Residues 1 to 53 (MTGGAMDPLPTAPGAAAAEAEVDEEADPPAADSPVPPVSEPRAPDAGQMQVPP) are disordered. One can recognise a PX domain in the interval 68-176 (ARDAVQVELV…KLFLSFSGPD (109 aa)). A 1,2-diacyl-sn-glycero-3-phospho-(1D-myo-inositol-3-phosphate) contacts are provided by R104, K130, and R143.

This sequence belongs to the sorting nexin family.

Its subcellular location is the early endosome membrane. Its function is as follows. May be involved in several stages of intracellular trafficking. May play a role in intracellular protein transport from early endosomes to the trans-Golgi network. This Bos taurus (Bovine) protein is Sorting nexin-8 (SNX8).